Consider the following 464-residue polypeptide: Glycine--tRNA ligase (464 aa).

Positions 104 and 175 each coordinate substrate. ATP is bound by residues 207–209, 217–222, 292–293, and 336–339; these read RNE, FRTREF, EL, and GVNR. A substrate-binding site is contributed by 222–226; the sequence is FEQME. 332 to 336 provides a ligand contact to substrate; sequence EPALG.

It belongs to the class-II aminoacyl-tRNA synthetase family. Homodimer.

It is found in the cytoplasm. It carries out the reaction tRNA(Gly) + glycine + ATP = glycyl-tRNA(Gly) + AMP + diphosphate. In terms of biological role, catalyzes the attachment of glycine to tRNA(Gly). In Leptospira interrogans serogroup Icterohaemorrhagiae serovar copenhageni (strain Fiocruz L1-130), this protein is Glycine--tRNA ligase.